The chain runs to 391 residues: Probable protein arginine N-methyltransferase 6.1 (391 aa).

A disordered region spans residues 1 to 35 (MLPSHLNGHSPLARRCPRLSAASPPATGDSDAAAA). The span at 20–35 (SAASPPATGDSDAAAA) shows a compositional bias: low complexity. One can recognise an SAM-dependent MTase PRMT-type domain in the interval 45-391 (DRIYFQSYSH…QTLVKDYAMR (347 aa)). S-adenosyl-L-methionine-binding residues include histidine 58, arginine 67, glycine 91, glutamate 113, and glutamate 142. Residues glutamate 156 and glutamate 165 contribute to the active site.

It belongs to the class I-like SAM-binding methyltransferase superfamily. Protein arginine N-methyltransferase family. PRMT6 subfamily.

Arginine methyltransferase that can both catalyze the formation of omega-N monomethylarginine (MMA) and asymmetrical dimethylarginine (aDMA). This is Probable protein arginine N-methyltransferase 6.1 (PRMT6.1) from Oryza sativa subsp. japonica (Rice).